The primary structure comprises 393 residues: N-lysine methyltransferase KMT5A (393 aa).

Residues 68-88 form a disordered region; the sequence is PGPEMVERRGPGRPRTDGENV. Residues 72–85 show a composition bias toward basic and acidic residues; the sequence is MVERRGPGRPRTDG. Ser100 carries the phosphoserine modification. The stretch at 134-163 forms a coiled coil; it reads RKREEKRNAGNAVRSAMKSEEQKIKDARKG. A disordered region spans residues 135-241; that stretch reads KREEKRNAGN…SRKSKAELQS (107 aa). A compositionally biased stretch (basic and acidic residues) spans 150–162; the sequence is MKSEEQKIKDARK. Residue Lys162 is modified to N6-acetyllysine. Thr181 carries the phosphothreonine modification. The segment covering 197-213 has biased composition (basic residues); the sequence is ALKKPIKGKQAPRKKAQ. In terms of domain architecture, SET spans 257–378; it reads EGMKIDLIDG…AGEELLYDYG (122 aa). S-adenosyl-L-methionine-binding positions include 267–269, Tyr312, and 339–340; these read KGR and NH.

Belongs to the class V-like SAM-binding methyltransferase superfamily. Histone-lysine methyltransferase family. PR/SET subfamily. As to quaternary structure, interacts with L3MBTL1. Interacts with SIRT2 (phosphorylated form); the interaction is direct, stimulates KMT5A-mediated methyltransferase activity at histone H4 'Lys-20' (H4K20me1) and is increased in a H(2)O(2)-induced oxidative stress-dependent manner. Acetylated at Lys-162; does not affect methyltransferase activity. Deacetylated at Lys-162 possibly by SIRT2; does not change methyltransferase activity. In terms of processing, ubiquitinated and degraded by the DCX(DTL) complex.

Its subcellular location is the nucleus. It localises to the chromosome. The catalysed reaction is L-lysyl(20)-[histone H4] + S-adenosyl-L-methionine = N(6)-methyl-L-lysyl(20)-[histone H4] + S-adenosyl-L-homocysteine + H(+). It catalyses the reaction L-lysyl-[protein] + S-adenosyl-L-methionine = N(6)-methyl-L-lysyl-[protein] + S-adenosyl-L-homocysteine + H(+). Its function is as follows. Protein-lysine N-methyltransferase that monomethylates both histones and non-histone proteins. Specifically monomethylates 'Lys-20' of histone H4 (H4K20me1). H4K20me1 is enriched during mitosis and represents a specific tag for epigenetic transcriptional repression. Mainly functions in euchromatin regions, thereby playing a central role in the silencing of euchromatic genes. Required for cell proliferation, probably by contributing to the maintenance of proper higher-order structure of DNA during mitosis. Involved in chromosome condensation and proper cytokinesis. Nucleosomes are preferred as substrate compared to free histones. Mediates monomethylation of p53/TP53 at 'Lys-382', leading to repress p53/TP53-target genes. Plays a negative role in TGF-beta response regulation and a positive role in cell migration. The chain is N-lysine methyltransferase KMT5A from Homo sapiens (Human).